We begin with the raw amino-acid sequence, 389 residues long: NADH-quinone oxidoreductase subunit D (389 aa).

It belongs to the complex I 49 kDa subunit family. In terms of assembly, NDH-1 is composed of 14 different subunits. Subunits NuoB, C, D, E, F, and G constitute the peripheral sector of the complex.

The protein resides in the cell inner membrane. It catalyses the reaction a quinone + NADH + 5 H(+)(in) = a quinol + NAD(+) + 4 H(+)(out). Its function is as follows. NDH-1 shuttles electrons from NADH, via FMN and iron-sulfur (Fe-S) centers, to quinones in the respiratory chain. The immediate electron acceptor for the enzyme in this species is believed to be ubiquinone. Couples the redox reaction to proton translocation (for every two electrons transferred, four hydrogen ions are translocated across the cytoplasmic membrane), and thus conserves the redox energy in a proton gradient. This is NADH-quinone oxidoreductase subunit D from Rickettsia typhi (strain ATCC VR-144 / Wilmington).